The chain runs to 513 residues: MNPSTLPAPPLAEVYDVAVIGGGINGVGIAADAAGRGLSVFLCEKDDLASHTSSASSKLIHGGLRYLEHYEFRLVREALAEREVLLAKAPHIVKQMRFVLPHRPHLRPAWMIRAGLFLYDHLGKREKLAGSKSLKFGANSPLKSEITKGFEYSDCWVDDARLVVLNAMAAREKGAHIHTQTRCISAHRSNGLWEMNMERADGSLFSIRARALVNAAGPWVAKFIRDDLKLDSPYGIRLIQGSHLIVPRLYEGAHAHILQNEDQRIVFTIPYLNHLTIIGTTDREYTGDPAKVAITEGETDYMLKVVNAHFKKQLSRDDIVHTYSGVRPLCNDESDNPSAITRDYTLALSGGNGEAPILSVFGGKLTTYRKLAESAMAQLAPFFTQMRPSWTAKASLPGGENMTTPERAGRRHPRQIRLGTERDAPRRWATTYGSRTWRLLEGVQALADLGDHLGGGLYTREVDYLCAEEWATQPQDILWRRTKLGLFTTAEEQDNVQRYLSKVGQTRAKIEAA.

Residue 16 to 44 (DVAVIGGGINGVGIAADAAGRGLSVFLCE) participates in FAD binding.

Belongs to the FAD-dependent glycerol-3-phosphate dehydrogenase family. The cofactor is FAD.

Its subcellular location is the cytoplasm. It catalyses the reaction a quinone + sn-glycerol 3-phosphate = dihydroxyacetone phosphate + a quinol. The sequence is that of Glycerol-3-phosphate dehydrogenase (glpD) from Pseudomonas tolaasii.